The chain runs to 164 residues: MRKSADEMFIGVRRAPISSNVGGTSFYGGDEYCSYYQSNGGVAKEDDGSAKKGFRRTGKGKLTAEAVSEAINRAAQGLPFEVVYYPTAGWSDFVVKAEDVEASMAIFWTPGTRVKMAMETEDSSRITWFQGIVFYTYQETGPWRGSPWNSFRYKIPFTIPLIFL.

It localises to the mitochondrion. This is an uncharacterized protein from Arabidopsis thaliana (Mouse-ear cress).